The chain runs to 191 residues: Stress response regulator protein 1 (191 aa).

The region spanning 62 to 181 (SFLLVDDNEI…TNYILQKIEQ (120 aa)) is the Response regulatory domain. Position 114 is a 4-aspartylphosphate (aspartate 114).

Functionally, required for stress adaptation, morphogenesis and virulence. This chain is Stress response regulator protein 1 (SRR1), found in Clavispora lusitaniae (strain ATCC 42720) (Yeast).